Reading from the N-terminus, the 480-residue chain is uncharacterized protein (480 aa).

The chain crosses the membrane as a helical span at residues 7–28; it reads HVISIFETFGAYFINIFYNFLY. 2 N-linked (GlcNAc...) asparagine; by host glycosylation sites follow: Asn-73 and Asn-195. Residues 195 to 235 are a coiled coil; sequence NRSLLYQIEELTSEKKSLLAELSTLRKKYEKRQSEYRRLVQ. Residues 297–332 are disordered; that stretch reads ELTSKSPSNYPVPQSRTIVSKPSDNYPVPQSRSSKI. A compositionally biased stretch (polar residues) spans 301-329; the sequence is KSPSNYPVPQSRTIVSKPSDNYPVPQSRS. The N-linked (GlcNAc...) asparagine; by host glycan is linked to Asn-455.

Belongs to the asfivirus B475L family.

It is found in the host membrane. This is an uncharacterized protein from African swine fever virus (isolate Pig/Kenya/KEN-50/1950) (ASFV).